A 263-amino-acid chain; its full sequence is DNA repair protein RecO (263 aa).

Residues 243-263 (DRKETARETVPTSDGTASNAV) form a disordered region. Positions 252–263 (VPTSDGTASNAV) are enriched in polar residues.

It belongs to the RecO family.

In terms of biological role, involved in DNA repair and RecF pathway recombination. The protein is DNA repair protein RecO of Neisseria meningitidis serogroup C / serotype 2a (strain ATCC 700532 / DSM 15464 / FAM18).